We begin with the raw amino-acid sequence, 437 residues long: Diaminopimelate decarboxylase (437 aa).

An N6-(pyridoxal phosphate)lysine modification is found at K81. Residues G256 and 298-301 each bind pyridoxal 5'-phosphate; that span reads EPGR. Positions 301, 337, and 341 each coordinate substrate. C366 serves as the catalytic Proton donor. Substrate is bound by residues E367 and Y396. Y396 lines the pyridoxal 5'-phosphate pocket.

This sequence belongs to the Orn/Lys/Arg decarboxylase class-II family. LysA subfamily. In terms of assembly, homodimer. It depends on pyridoxal 5'-phosphate as a cofactor.

It carries out the reaction meso-2,6-diaminopimelate + H(+) = L-lysine + CO2. Its pathway is amino-acid biosynthesis; L-lysine biosynthesis via DAP pathway; L-lysine from DL-2,6-diaminopimelate: step 1/1. Its function is as follows. Specifically catalyzes the decarboxylation of meso-diaminopimelate (meso-DAP) to L-lysine. The protein is Diaminopimelate decarboxylase of Actinosynnema pretiosum subsp. auranticum.